Reading from the N-terminus, the 203-residue chain is Regulator of ribosome biosynthesis (203 aa).

The interval 184–203 (RKRLVKKNEKQQRRNMKNAL) is disordered.

Belongs to the RRS1 family. As to quaternary structure, component of a hexameric 5S RNP precursor complex, composed of 5S RNA, RRS1, RPF2, RPL5, RPL11A/RPL11B and SYO1; this complex acts as a precursor for ribosome assembly.

It localises to the nucleus. Required for ribosome biogenesis. The sequence is that of Regulator of ribosome biosynthesis (RRS1) from Saccharomyces cerevisiae (strain ATCC 204508 / S288c) (Baker's yeast).